The sequence spans 84 residues: Small ribosomal subunit protein uS17 (84 aa).

Belongs to the universal ribosomal protein uS17 family. Part of the 30S ribosomal subunit.

One of the primary rRNA binding proteins, it binds specifically to the 5'-end of 16S ribosomal RNA. The polypeptide is Small ribosomal subunit protein uS17 (Clostridium perfringens (strain ATCC 13124 / DSM 756 / JCM 1290 / NCIMB 6125 / NCTC 8237 / Type A)).